We begin with the raw amino-acid sequence, 603 residues long: Elongation factor 4 (603 aa).

One can recognise a tr-type G domain in the interval 2–184; it reads NHIRNFSIIA…AVVALIPAPK (183 aa). Residues 14 to 19 and 131 to 134 each bind GTP; these read DHGKST and NKMD.

The protein belongs to the TRAFAC class translation factor GTPase superfamily. Classic translation factor GTPase family. LepA subfamily.

Its subcellular location is the cell inner membrane. It catalyses the reaction GTP + H2O = GDP + phosphate + H(+). Functionally, required for accurate and efficient protein synthesis under certain stress conditions. May act as a fidelity factor of the translation reaction, by catalyzing a one-codon backward translocation of tRNAs on improperly translocated ribosomes. Back-translocation proceeds from a post-translocation (POST) complex to a pre-translocation (PRE) complex, thus giving elongation factor G a second chance to translocate the tRNAs correctly. Binds to ribosomes in a GTP-dependent manner. The chain is Elongation factor 4 from Polaromonas naphthalenivorans (strain CJ2).